The sequence spans 456 residues: Phytase A (456 aa).

An N-terminal signal peptide occupies residues 1 to 24 (MSSMASVLFAALAISGVQVTPSRG). The 1D-myo-inositol hexakisphosphate site is built by glutamine 37, tyrosine 38, arginine 68, histidine 69, arginine 72, threonine 75, and arginine 152. 4 disulfide bridges follow: cysteine 58/cysteine 396, cysteine 197/cysteine 450, cysteine 246/cysteine 264, and cysteine 421/cysteine 429. Histidine 69 acts as the Nucleophile in catalysis. Lysine 283 is a 1D-myo-inositol hexakisphosphate binding site. A glycan (N-linked (GlcNAc...) asparagine) is linked at asparagine 317. Histidine 343 and aspartate 344 together coordinate 1D-myo-inositol hexakisphosphate. The N-linked (GlcNAc...) asparagine glycan is linked to asparagine 358.

Belongs to the histidine acid phosphatase family. As to quaternary structure, monomer.

The protein resides in the secreted. The catalysed reaction is 1D-myo-inositol hexakisphosphate + H2O = 1D-myo-inositol 1,2,4,5,6-pentakisphosphate + phosphate. The enzyme catalyses 1D-myo-inositol 1,2,4,5,6-pentakisphosphate + H2O = 1D-myo-inositol 1,2,5,6-tetrakisphosphate + phosphate. It carries out the reaction 1D-myo-inositol 1,2,5,6-tetrakisphosphate + H2O = 1D-myo-inositol 1,2,6-trisphosphate + phosphate. It catalyses the reaction 1D-myo-inositol 1,2,6-trisphosphate + H2O = 1D-myo-inositol 1,2-bisphosphate + phosphate. The catalysed reaction is 1D-myo-inositol 1,2-bisphosphate + H2O = 1D-myo-inositol 2-phosphate + phosphate. Functionally, catalyzes the phosphate monoester hydrolysis of phytic acid (myo-inositol hexakisphosphate), which results in the stepwise formation of myo-inositol pentakis-, tetrakis-, tris-, bis-, and monophosphates, as well as the liberation of inorganic phosphate. Myo-inositol 2-monophosphate is the end product. The sequence is that of Phytase A from Arthroderma benhamiae (strain ATCC MYA-4681 / CBS 112371) (Trichophyton mentagrophytes).